The sequence spans 202 residues: 3-isopropylmalate dehydratase small subunit (202 aa).

It belongs to the LeuD family. LeuD type 1 subfamily. As to quaternary structure, heterodimer of LeuC and LeuD.

It carries out the reaction (2R,3S)-3-isopropylmalate = (2S)-2-isopropylmalate. It participates in amino-acid biosynthesis; L-leucine biosynthesis; L-leucine from 3-methyl-2-oxobutanoate: step 2/4. Catalyzes the isomerization between 2-isopropylmalate and 3-isopropylmalate, via the formation of 2-isopropylmaleate. This is 3-isopropylmalate dehydratase small subunit from Novosphingobium aromaticivorans (strain ATCC 700278 / DSM 12444 / CCUG 56034 / CIP 105152 / NBRC 16084 / F199).